We begin with the raw amino-acid sequence, 264 residues long: 5'-nucleotidase SurE (264 aa).

Residues Asp10, Asp11, Ser43, and Asn97 each contribute to the a divalent metal cation site.

Belongs to the SurE nucleotidase family. The cofactor is a divalent metal cation.

The protein resides in the cytoplasm. The enzyme catalyses a ribonucleoside 5'-phosphate + H2O = a ribonucleoside + phosphate. In terms of biological role, nucleotidase that shows phosphatase activity on nucleoside 5'-monophosphates. This chain is 5'-nucleotidase SurE, found in Sulfurimonas denitrificans (strain ATCC 33889 / DSM 1251) (Thiomicrospira denitrificans (strain ATCC 33889 / DSM 1251)).